The following is a 75-amino-acid chain: ATP synthase subunit c (75 aa).

2 helical membrane passes run 13-33 (LNVVGYGLAAIGPGIGLGILI) and 54-74 (MFLGLAFVEVLALLGFVLAFI).

This sequence belongs to the ATPase C chain family. In terms of assembly, F-type ATPases have 2 components, F(1) - the catalytic core - and F(0) - the membrane proton channel. F(1) has five subunits: alpha(3), beta(3), gamma(1), delta(1), epsilon(1). F(0) has three main subunits: a(1), b(2) and c(10-14). The alpha and beta chains form an alternating ring which encloses part of the gamma chain. F(1) is attached to F(0) by a central stalk formed by the gamma and epsilon chains, while a peripheral stalk is formed by the delta and b chains.

Its subcellular location is the cell membrane. Its function is as follows. F(1)F(0) ATP synthase produces ATP from ADP in the presence of a proton or sodium gradient. F-type ATPases consist of two structural domains, F(1) containing the extramembraneous catalytic core and F(0) containing the membrane proton channel, linked together by a central stalk and a peripheral stalk. During catalysis, ATP synthesis in the catalytic domain of F(1) is coupled via a rotary mechanism of the central stalk subunits to proton translocation. Functionally, key component of the F(0) channel; it plays a direct role in translocation across the membrane. A homomeric c-ring of between 10-14 subunits forms the central stalk rotor element with the F(1) delta and epsilon subunits. This is ATP synthase subunit c from Bifidobacterium adolescentis (strain ATCC 15703 / DSM 20083 / NCTC 11814 / E194a).